Here is an 811-residue protein sequence, read N- to C-terminus: E3 ubiquitin-protein ligase RNF10 (811 aa).

A compositionally biased stretch (polar residues) spans 1 to 10; it reads MPLSSPNAAA. The segment at 1–119 is disordered; that stretch reads MPLSSPNAAA…SFNGGRRDEV (119 aa). Serine 5 is subject to Phosphoserine. 3 stretches are compositionally biased toward low complexity: residues 18–31, 78–90, and 104–113; these read NSGS…SGSS, NNQS…QKSK, and SKLFSSSFNG. Residues 101–185 are interaction with MEOX2; sequence GGSSKLFSSS…FNKELFLQAN (85 aa). 2 positions are modified to phosphoserine: serine 110 and serine 128. The RING-type zinc finger occupies 225-267; that stretch reads CPICLYPPTAAKITRCGHIFCWACILHYLSLSEKTWSKCPICY. Residues 653 to 662 are compositionally biased toward polar residues; that stretch reads DSALGPTSTE. Disordered stretches follow at residues 653 to 672, 724 to 761, and 776 to 811; these read DSAL…ISPL, DVWP…VPSF, and LDTP…VHTK. The segment covering 724–736 has biased composition (basic and acidic residues); it reads DVWPKTAPKKDEN. The span at 802 to 811 shows a compositional bias: polar residues; it reads LFSTSVVHTK.

Belongs to the RNF10 family. In terms of assembly, interacts with MEOX2.

It is found in the cytoplasm. The protein localises to the nucleus. It carries out the reaction S-ubiquitinyl-[E2 ubiquitin-conjugating enzyme]-L-cysteine + [acceptor protein]-L-lysine = [E2 ubiquitin-conjugating enzyme]-L-cysteine + N(6)-ubiquitinyl-[acceptor protein]-L-lysine.. It functions in the pathway protein modification; protein ubiquitination. E3 ubiquitin-protein ligase that catalyzes monoubiquitination of 40S ribosomal proteins RPS2/us5 and RPS3/us3 in response to ribosome stalling. Part of a ribosome quality control that takes place when ribosomes have stalled during translation initiation (iRQC): RNF10 acts by mediating monoubiquitination of RPS2/us5 and RPS3/us3, promoting their degradation by the proteasome. Also promotes ubiquitination of 40S ribosomal proteins in response to ribosome stalling during translation elongation. The action of RNF10 in iRQC is counteracted by USP10. May also act as a transcriptional factor involved in the regulation of MAG (Myelin-associated glycoprotein) expression. Acts as a regulator of Schwann cell differentiation and myelination. The chain is E3 ubiquitin-protein ligase RNF10 from Homo sapiens (Human).